A 334-amino-acid chain; its full sequence is Formamidase (334 aa).

In terms of domain architecture, CN hydrolase spans 14–260 (FLVAAIQFPV…WEIVTGEIYP (247 aa)). The active-site Proton acceptor is E60. K133 (proton donor) is an active-site residue. Catalysis depends on C166, which acts as the Nucleophile.

This sequence belongs to the carbon-nitrogen hydrolase superfamily. Aliphatic amidase family.

The catalysed reaction is formamide + H2O = formate + NH4(+). Functionally, is an aliphatic amidase with a restricted substrate specificity, as it only hydrolyzes formamide. The sequence is that of Formamidase from Helicobacter pylori (strain Shi470).